Reading from the N-terminus, the 97-residue chain is MTQKNGADRPDDYKRFSSLDKEYDFQQSIRSNTETESVNTETQTHNKENKNDTTDVAGKYFEPSDYKGSTQLEKGLAETHEQVSDDYFEGTIDQNLD.

Basic and acidic residues predominate over residues 1–24 (MTQKNGADRPDDYKRFSSLDKEYD). Residues 1 to 97 (MTQKNGADRP…FEGTIDQNLD (97 aa)) are disordered. A compositionally biased stretch (low complexity) spans 31 to 43 (SNTETESVNTETQ). Residues 44 to 53 (THNKENKNDT) show a composition bias toward basic and acidic residues.

This is an uncharacterized protein from Bacillus subtilis (strain 168).